A 267-amino-acid chain; its full sequence is Kafirin PSK8 (267 aa).

A signal peptide spans 1-19 (TKIFALLALHALLVSGTTA).

It belongs to the zein family.

Major seed storage prolamin. The chain is Kafirin PSK8 from Sorghum bicolor (Sorghum).